A 404-amino-acid chain; its full sequence is Epoxide hydrolase 1 (404 aa).

The chain crosses the membrane as a helical span at residues 74–96 (ILVRLLQFYYFVKFSAILFLGFA). An AB hydrolase-1 domain is found at 140–389 (PLMLFIHGYP…ASHWVQQDEP (250 aa)). The Nucleophile role is filled by Asp-215. The active-site Proton donor is Tyr-327. The active-site Proton acceptor is His-382.

This sequence belongs to the AB hydrolase superfamily. Epoxide hydrolase family.

It localises to the membrane. The catalysed reaction is an epoxide + H2O = an ethanediol. It carries out the reaction 8,9-epoxy-(5Z,11Z,14Z)-eicosatrienoate + H2O = 8,9-dihydroxy-(5Z,11Z,14Z)-eicosatrienoate. It catalyses the reaction 11,12-epoxy-(5Z,8Z,14Z)-eicosatrienoate + H2O = 11,12-dihydroxy-(5Z,8Z,14Z)-eicosatrienoate. The enzyme catalyses 14,15-epoxy-(5Z,8Z,11Z)-eicosatrienoate + H2O = 14,15-dihydroxy-(5Z,8Z,11Z)-eicosatrienoate. The catalysed reaction is 12,13-epoxy-(9Z)-octadecenoate + H2O = 12,13-dihydroxy-(9Z)-octadecenoate. It carries out the reaction 9,10-epoxy-(12Z)-octadecenoate + H2O = 9,10-dihydroxy-(12Z)-octadecenoate. The protein operates within lipid metabolism. In terms of biological role, catalyzes the hydrolysis of epoxide-containing fatty acids. Active against epoxyeicosatrienoic acids (EETs) including 8,9-epoxy-(5Z,11Z,14Z)-eicosatrienoate (8,9-EET), 11,12-epoxy-(5Z,8Z,14Z)-eicosatrienoate (11,12-EET) and 14,15-epoxy-(5Z,8Z,11Z)-eicosatrienoate (14,15-EET) and the linoleic acid metabolites 12,13-epoxy-(9Z)-octadecenoate (12,13-EpOME) and 9,10-epoxy-(12Z)-octadecenoate (9,10-EpOME). These epoxides function as lipid signaling molecules, the enzyme can deplete the supply of the epoxide signal by transforming them into diol species that are more readily eliminated through excretion. This is Epoxide hydrolase 1 from Caenorhabditis elegans.